The primary structure comprises 596 residues: Elongation factor 4 (596 aa).

The region spanning 2–183 (KNIRNFSIIA…TIITKIPAPK (182 aa)) is the tr-type G domain. GTP is bound by residues 14 to 19 (DHGKST) and 130 to 133 (NKID).

The protein belongs to the TRAFAC class translation factor GTPase superfamily. Classic translation factor GTPase family. LepA subfamily.

Its subcellular location is the cell inner membrane. It catalyses the reaction GTP + H2O = GDP + phosphate + H(+). Functionally, required for accurate and efficient protein synthesis under certain stress conditions. May act as a fidelity factor of the translation reaction, by catalyzing a one-codon backward translocation of tRNAs on improperly translocated ribosomes. Back-translocation proceeds from a post-translocation (POST) complex to a pre-translocation (PRE) complex, thus giving elongation factor G a second chance to translocate the tRNAs correctly. Binds to ribosomes in a GTP-dependent manner. In Campylobacter lari (strain RM2100 / D67 / ATCC BAA-1060), this protein is Elongation factor 4.